Here is a 311-residue protein sequence, read N- to C-terminus: MLSPIILFLSIIIDRIFGELPEKIHPTVWIGNIISFFEKILKSTHSKNKYKDFIFGTLTTISVLFIVFGAIYGVEILINNIQNIYIKYIVYSFLISTTIGYKSLLQFSKTPLNHIKNKDIESAKKSVQCIVSRNTDKLDTKHILSASIESASENITDSIIAPLFYAIFFGLEGAFIYRAINTMDAMLGYRNKKYEYYGKLPAILDDIANFIPSRISGILLVLFAPLYGGNIKKALNGFIKEGHKTPSPNSGYTMAVMANSLNMTLEKIGYYKLGNGEITLKKAYNSLFSIDVVIFSFIVLYSIYYVIFYYF.

Helical transmembrane passes span 53 to 73, 76 to 96, 157 to 177, and 288 to 308; these read FIFG…AIYG, ILIN…FLIS, DSII…AFIY, and FSID…YVIF.

The protein belongs to the CobD/CbiB family.

The protein localises to the cell membrane. It functions in the pathway cofactor biosynthesis; adenosylcobalamin biosynthesis. In terms of biological role, converts cobyric acid to cobinamide by the addition of aminopropanol on the F carboxylic group. The protein is Probable cobalamin biosynthesis protein CobD of Methanococcus aeolicus (strain ATCC BAA-1280 / DSM 17508 / OCM 812 / Nankai-3).